Here is a 303-residue protein sequence, read N- to C-terminus: MNDAKKYIVSVLILLVAGMFGGCIKEDYSDCPRPFRLTVRAWDADMQDITETGAVQRVVIFVFDETGRRIDRLMMDAAQVAARKPIPLEYDGPTTVSFVAWANPDDHMLEETANVQNVKDLFFRLSSTDGIAQSPGDLFSGVLTCPIEYGSIEQGTDQTVDIYRRTAQVHIIIRGYQEWLEANGPRQLPDYADILLGETPDTYTGLAELIGNAVQYRPDGQIQNGDFISPIFRVYPTLDTTPLHLKLYAYGQELLNISTGSDGVPFIPVIGKMLNIYIDLRGANLNVLVSVTPWDVVQQYAEY.

Residues 1-22 form the signal peptide; it reads MNDAKKYIVSVLILLVAGMFGG. Cys23 carries N-palmitoyl cysteine lipidation. Cys23 carries the S-diacylglycerol cysteine lipid modification.

Belongs to the bacteroidetes fimbrillin superfamily. FimB/Mfa2 family. In terms of assembly, fimB is not part of the fimbrium itself, but anchors the fimbrium in the outer membrane. Linear, head-to-tail oligomerization of fimbrial subunits mediates assembly of the fimbrium stalk, while the minor components FimC, FimD and FimE probably form the fimbrium tip. The anchoring subunit FimB limits fimbrium length and is important for solid fimbrium attachment to the outer membrane. In its absence, the major fimbriae become very long and are easily detached from the membrane.

It is found in the cell outer membrane. Anchoring subunit of the major fimbriae. Regulates fimbrial length. These filamentous pili are attached to the cell surface; they mediate biofilm formation, adhesion onto host cells and onto other bacteria that are part of the oral microbiome. Fimbriae of P.gingivalis are major virulence factors. The polypeptide is Major fimbrium anchoring subunit FimB (Porphyromonas gingivalis (strain ATCC BAA-308 / W83)).